A 520-amino-acid polypeptide reads, in one-letter code: Transactivator/viroplasmin protein (520 aa).

2 disordered regions span residues 32–51 (GSSQ…KEEA) and 487–520 (QDAS…KQVD). Basic and acidic residues predominate over residues 40–51 (SLHRETPEKEEA).

Belongs to the caulimoviridae viroplasmin family.

The protein resides in the host cytoplasm. Functionally, enhances the ribosomal termination-reinitiation event leading to the translation of major open reading frames on the polycistronic viral RNAs. This chain is Transactivator/viroplasmin protein, found in Arabidopsis thaliana (Mouse-ear cress).